The primary structure comprises 317 residues: Pantothenate kinase (317 aa).

95–102 contributes to the ATP binding site; sequence GSVAVGKS.

It belongs to the prokaryotic pantothenate kinase family.

Its subcellular location is the cytoplasm. It catalyses the reaction (R)-pantothenate + ATP = (R)-4'-phosphopantothenate + ADP + H(+). The protein operates within cofactor biosynthesis; coenzyme A biosynthesis; CoA from (R)-pantothenate: step 1/5. This Rhodopseudomonas palustris (strain BisB18) protein is Pantothenate kinase.